A 165-amino-acid polypeptide reads, in one-letter code: Pyruvoyl-dependent arginine decarboxylase 1 (165 aa).

Pyruvic acid (Ser) is present on Ser-45.

It belongs to the PdaD family. Pyruvate serves as cofactor.

It carries out the reaction L-arginine + H(+) = agmatine + CO2. The sequence is that of Pyruvoyl-dependent arginine decarboxylase 1 (pdaD1) from Methanosarcina mazei (strain ATCC BAA-159 / DSM 3647 / Goe1 / Go1 / JCM 11833 / OCM 88) (Methanosarcina frisia).